The following is a 148-amino-acid chain: Cystatin-D (148 aa).

The signal sequence occupies residues 1 to 33 (MASLLSPSMPVLAAVALTLTLAVIPEASTNAEA). One can recognise a Cystatin kininogen-type domain in the interval 36–148 (VVLGGVEPAD…SMTNFNCYNF (113 aa)). 2 cysteine pairs are disulfide-bonded: cysteine 101–cysteine 111 and cysteine 125–cysteine 145.

This sequence belongs to the cystatin family. As to expression, in cartilage, expressed mainly in mature chondrocytes including prehypertrophic and hypertrophic cells (at protein level). Expressed exclusively in cartilage.

It localises to the cytoplasm. The protein resides in the cytosol. In terms of biological role, may play a role in the last steps of the chondrocyte differentiation pathway as an inducer of maturation. Induces chondrocyte calcification during endochondral ossification by playing a role in the transcriptional inhibition of ENPP1, a generator of pyrophosphate which inhibits calcification. Possibly impairs the binding of a transcription factor to the ENPP1 promoter. Unlike other cystatins, does not have thiol protease inhibitor activity. This Mus musculus (Mouse) protein is Cystatin-D.